Reading from the N-terminus, the 290-residue chain is Probable 2-(5''-triphosphoribosyl)-3'-dephosphocoenzyme-A synthase (290 aa).

This sequence belongs to the CitG/MdcB family.

The enzyme catalyses 3'-dephospho-CoA + ATP = 2'-(5''-triphospho-alpha-D-ribosyl)-3'-dephospho-CoA + adenine. In terms of biological role, involved in the formation of 2-(5''-phosphoribosyl)-3'-dephosphocoenzyme-A, the prosthetic group of the acyl-carrier protein of the malonate decarboxylase. The sequence is that of Probable 2-(5''-triphosphoribosyl)-3'-dephosphocoenzyme-A synthase from Stutzerimonas stutzeri (strain A1501) (Pseudomonas stutzeri).